The chain runs to 564 residues: Diacylglycerol kinase epsilon (564 aa).

A helical transmembrane segment spans residues 20-40 (LVLWTLCSVLLPVFITLWCSL). Phorbol-ester/DAG-type zinc fingers lie at residues 57–106 (KHCW…RFPC) and 121–174 (PHHW…SEKC). The 142-residue stretch at 212–353 (KQWTPLIILA…LDRWKVQVTN (142 aa)) folds into the DAGKc domain.

The protein belongs to the eukaryotic diacylglycerol kinase family. Highly expressed in brain and heart. In brain, highly expressed in Purkinje cells of the cerebellum, pyramidal cells of the hippocampus, mitral cells of the olfactory bulb, and neurons of the substantia nigra. Lower expression in neurons of the thalamus, superior olive, and lateral reticular nucleus is also detected. Expressed in platelets.

It is found in the membrane. The protein resides in the cytoplasm. It catalyses the reaction a 1,2-diacyl-sn-glycerol + ATP = a 1,2-diacyl-sn-glycero-3-phosphate + ADP + H(+). The catalysed reaction is 1-hexadecanoyl-2-(5Z,8Z,11Z,14Z-eicosatetraenoyl)-sn-glycerol + ATP = 1-hexadecanoyl-2-(5Z,8Z,11Z,14Z-eicosatetraenoyl)-sn-glycero-3-phosphate + ADP + H(+). The enzyme catalyses 1-octadecanoyl-2-(5Z,8Z,11Z,14Z-eicosatetraenoyl)-sn-glycerol + ATP = 1-octadecanoyl-2-(5Z,8Z,11Z,14Z-eicosatetraenoyl)-sn-glycero-3-phosphate + ADP + H(+). It carries out the reaction 1-eicosanoyl-2-(5Z,8Z,11Z,14Z)-eicosatetraenoyl-sn-glycerol + ATP = 1-eicosanoyl-2-(5Z,8Z,11Z,14Z)-eicosatetraenoyl-sn-glycero-3-phosphate + ADP + H(+). It catalyses the reaction 1,2-di-(5Z,8Z,11Z,14Z)-eicosatetraenoyl-sn-glycerol + ATP = 1,2-di-(5Z,8Z,11Z,14Z)-eicosatetraenoyl-sn-glycero-3-phosphate + ADP + H(+). The catalysed reaction is 1-octadecanoyl-2-(9Z,12Z)-octadecadienoyl-sn-glycerol + ATP = 1-octadecanoyl-2-(9Z,12Z-octadecadienoyl)-sn-glycero-3-phosphate + ADP + H(+). The enzyme catalyses 1,2-di-(9Z,12Z-octadecadienoyl)-sn-glycerol + ATP = 1,2-di-(9Z,12Z-octadecadienoyl)-sn-glycero-3-phosphate + ADP + H(+). It carries out the reaction 1,2-di-(9Z-octadecenoyl)-sn-glycerol + ATP = 1,2-di-(9Z-octadecenoyl)-sn-glycero-3-phosphate + ADP + H(+). It participates in lipid metabolism; glycerolipid metabolism. Its function is as follows. Membrane-bound diacylglycerol kinase that converts diacylglycerol/DAG into phosphatidic acid/phosphatidate/PA and regulates the respective levels of these two bioactive lipids. Thereby, acts as a central switch between the signaling pathways activated by these second messengers with different cellular targets and opposite effects in numerous biological processes. Also plays an important role in the biosynthesis of complex lipids. Displays specificity for diacylglycerol substrates with an arachidonoyl acyl chain at the sn-2 position, with the highest activity toward 1-octadecanoyl-2-(5Z,8Z,11Z,14Z-eicosatetraenoyl)-sn-glycerol the main diacylglycerol intermediate within the phosphatidylinositol turnover cycle. Can also phosphorylate diacylglycerol substrates with a linoleoyl acyl chain at the sn-2 position but much less efficiently. This Mus musculus (Mouse) protein is Diacylglycerol kinase epsilon (Dgke).